We begin with the raw amino-acid sequence, 208 residues long: MRRDIAGIVLAGGQSRRMGGGDKSLLPLGSGSVLDQILSRFGPQIEILALSANGDPERFSRFGLPVLADTVEGFAGPLAGILTGLEWAIAGTPCKAVVTAAGDTPFLPLDLVDRLAAAARDHPGSIAVASSAGRRHPTFALWPTECRDALRHFLVDEDNRRVSDFIERHGHVEVEFRFVQSAGLDPFFNINVPDDLAQAARLLQSMTS.

Residues 10-12 (LAG), K23, D69, and D103 contribute to the GTP site. D103 is a Mg(2+) binding site.

It belongs to the MobA family. As to quaternary structure, monomer. The cofactor is Mg(2+).

The protein localises to the cytoplasm. The catalysed reaction is Mo-molybdopterin + GTP + H(+) = Mo-molybdopterin guanine dinucleotide + diphosphate. Functionally, transfers a GMP moiety from GTP to Mo-molybdopterin (Mo-MPT) cofactor (Moco or molybdenum cofactor) to form Mo-molybdopterin guanine dinucleotide (Mo-MGD) cofactor. In Mesorhizobium japonicum (strain LMG 29417 / CECT 9101 / MAFF 303099) (Mesorhizobium loti (strain MAFF 303099)), this protein is Molybdenum cofactor guanylyltransferase.